A 115-amino-acid chain; its full sequence is Large ribosomal subunit protein bL20 (115 aa).

Belongs to the bacterial ribosomal protein bL20 family.

Functionally, binds directly to 23S ribosomal RNA and is necessary for the in vitro assembly process of the 50S ribosomal subunit. It is not involved in the protein synthesizing functions of that subunit. This Synechococcus sp. (strain RCC307) protein is Large ribosomal subunit protein bL20.